We begin with the raw amino-acid sequence, 290 residues long: Pyridoxal 5'-phosphate synthase subunit PdxS (290 aa).

A D-ribose 5-phosphate-binding site is contributed by Asp22. The Schiff-base intermediate with D-ribose 5-phosphate role is filled by Lys79. Gly151 is a binding site for D-ribose 5-phosphate. D-glyceraldehyde 3-phosphate is bound at residue Arg163. D-ribose 5-phosphate contacts are provided by residues Gly212 and 233-234; that span reads GS.

This sequence belongs to the PdxS/SNZ family. In terms of assembly, in the presence of PdxT, forms a dodecamer of heterodimers.

It carries out the reaction aldehydo-D-ribose 5-phosphate + D-glyceraldehyde 3-phosphate + L-glutamine = pyridoxal 5'-phosphate + L-glutamate + phosphate + 3 H2O + H(+). It functions in the pathway cofactor biosynthesis; pyridoxal 5'-phosphate biosynthesis. Catalyzes the formation of pyridoxal 5'-phosphate from ribose 5-phosphate (RBP), glyceraldehyde 3-phosphate (G3P) and ammonia. The ammonia is provided by the PdxT subunit. Can also use ribulose 5-phosphate and dihydroxyacetone phosphate as substrates, resulting from enzyme-catalyzed isomerization of RBP and G3P, respectively. This Clostridium botulinum (strain Loch Maree / Type A3) protein is Pyridoxal 5'-phosphate synthase subunit PdxS.